The primary structure comprises 309 residues: Type II methyltransferase M.HgiDI (309 aa).

The 297-residue stretch at 1 to 297 folds into the SAM-dependent MTase C5-type domain; that stretch reads MKTIDLFAGC…TSLQAYLNQP (297 aa). Cysteine 75 is a catalytic residue.

This sequence belongs to the class I-like SAM-binding methyltransferase superfamily. C5-methyltransferase family.

The catalysed reaction is a 2'-deoxycytidine in DNA + S-adenosyl-L-methionine = a 5-methyl-2'-deoxycytidine in DNA + S-adenosyl-L-homocysteine + H(+). Functionally, a methylase that recognizes the double-stranded sequence 5'-GRCGYC-3', methylates C-? on both strands, and protects the DNA from cleavage by the HgiDI endonuclease. This Herpetosiphon aurantiacus (Herpetosiphon giganteus) protein is Type II methyltransferase M.HgiDI.